A 132-amino-acid polypeptide reads, in one-letter code: Vesicle transport protein GOT1A (132 aa).

The Cytoplasmic segment spans residues 1 to 16 (MISITEWQKIGVGTTG). A helical transmembrane segment spans residues 17–37 (FGIFFILFGMLLYFDSVLLAF). The Lumenal portion of the chain corresponds to 38 to 39 (GN). Residues 40-60 (LLFLTGLSLIIGLRRTFSFFF) form a helical membrane-spanning segment. Residues 61–68 (QRHKFKGT) lie on the Cytoplasmic side of the membrane. The chain crosses the membrane as a helical span at residues 69-89 (SFFLGGVVIVLLRWPLLGMCL). Residues 90-100 (ETYGFFSLFRG) are Lumenal-facing. The helical transmembrane segment at 101–121 (FFPVAFGFLGSASNIPFLSAL) threads the bilayer. Topologically, residues 122–132 (FQRLQGTSSMV) are cytoplasmic.

The protein belongs to the GOT1 family.

The protein resides in the golgi apparatus membrane. May be involved in fusion of ER-derived transport vesicles with the Golgi complex. The chain is Vesicle transport protein GOT1A from Bos taurus (Bovine).